The following is a 123-amino-acid chain: Small ribosomal subunit protein uS12 (123 aa).

Residues 1–25 (MPTINQLVRKPRKSRSALNKAPALQ) form a disordered region. 3-methylthioaspartic acid is present on Asp-90.

It belongs to the universal ribosomal protein uS12 family. As to quaternary structure, part of the 30S ribosomal subunit. Contacts proteins S8 and S17. May interact with IF1 in the 30S initiation complex.

Its function is as follows. With S4 and S5 plays an important role in translational accuracy. Functionally, interacts with and stabilizes bases of the 16S rRNA that are involved in tRNA selection in the A site and with the mRNA backbone. Located at the interface of the 30S and 50S subunits, it traverses the body of the 30S subunit contacting proteins on the other side and probably holding the rRNA structure together. The combined cluster of proteins S8, S12 and S17 appears to hold together the shoulder and platform of the 30S subunit. The chain is Small ribosomal subunit protein uS12 from Ehrlichia canis (strain Jake).